Here is a 941-residue protein sequence, read N- to C-terminus: Pre-mRNA-processing factor 6 (941 aa).

Residues 1 to 79 form a disordered region; the sequence is MNKKKKPFLG…DEDLNDTNYD (79 aa). Basic and acidic residues predominate over residues 39–65; it reads DANDPVDDRHAPPGKRTVGDQMKKNQA. The span at 66–78 shows a compositional bias: acidic residues; sequence ADDDDEDLNDTNY. Phosphoserine is present on serine 143. Phosphothreonine occurs at positions 180, 266, and 275. A Phosphoserine modification is found at serine 279. HAT repeat units follow at residues 384–416, 418–444, 445–476, 554–586, 588–620, 622–654, 689–721, 723–755, and 855–887; these read TDIR…LEEP, DARI…ARLE, TYEN…LEEA, NALE…FEKN, GTRE…SKWL, GDVP…LESE, DNIR…IEEQ, EMME…LEEK, and RKIT…FELQ.

Identified in the spliceosome B complex. Identified in the spliceosome C complex. Associates with the U5 snRNP particle. Component of the U4/U6-U5 tri-snRNP complex composed of the U4, U6 and U5 snRNAs and at least PRPF3, PRPF4, PRPF6, PRPF8, PRPF31, SNRNP200, TXNL4A, SNRNP40, DDX23, CD2BP2, PPIH, SNU13, EFTUD2, SART1 and USP39, LSm proteins LSm2-8 and Sm proteins. Interacts with ARAF. Interacts with AR and NR3C1, but not ESR1, independently of the presence of hormones. Interacts with USH1G. In terms of processing, phosphorylated by PRP4K during spliceosome assembly. As to expression, widely expressed.

The protein resides in the nucleus. Its subcellular location is the nucleoplasm. The protein localises to the nucleus speckle. Involved in pre-mRNA splicing as component of the U4/U6-U5 tri-snRNP complex, one of the building blocks of the spliceosome. Enhances dihydrotestosterone-induced transactivation activity of AR, as well as dexamethasone-induced transactivation activity of NR3C1, but does not affect estrogen-induced transactivation. This chain is Pre-mRNA-processing factor 6, found in Homo sapiens (Human).